We begin with the raw amino-acid sequence, 595 residues long: D-xylonate dehydratase (595 aa).

[2Fe-2S] cluster is bound at residue C64. E96 serves as a coordination point for Mg(2+). C132 contacts [2Fe-2S] cluster. Position 133 (D133) interacts with Mg(2+). Position 205 (C205) interacts with [2Fe-2S] cluster. E467 is a Mg(2+) binding site.

This sequence belongs to the IlvD/Edd family. As to quaternary structure, homotetramer. [2Fe-2S] cluster serves as cofactor. The cofactor is Mg(2+).

It carries out the reaction D-xylonate = 2-dehydro-3-deoxy-D-arabinonate + H2O. The catalysed reaction is D-gluconate = 2-dehydro-3-deoxy-D-gluconate + H2O. It functions in the pathway carbohydrate metabolism; D-xylose degradation. In terms of biological role, catalyzes the dehydration of D-xylonate to 2-dehydro-3-deoxy-D-arabinonate during D-xylose degradation. Can also dehydrate D-gluconate, with similar catalytic efficiency. Has weak activity with D-galactonate, D-fuconate and L-arabinonate. The sequence is that of D-xylonate dehydratase from Caulobacter vibrioides (strain ATCC 19089 / CIP 103742 / CB 15) (Caulobacter crescentus).